Here is a 211-residue protein sequence, read N- to C-terminus: Ribosomal RNA large subunit methyltransferase E (211 aa).

The S-adenosyl-L-methionine site is built by G60, W62, D80, D96, and D121. K161 (proton acceptor) is an active-site residue.

This sequence belongs to the class I-like SAM-binding methyltransferase superfamily. RNA methyltransferase RlmE family.

It localises to the cytoplasm. It carries out the reaction uridine(2552) in 23S rRNA + S-adenosyl-L-methionine = 2'-O-methyluridine(2552) in 23S rRNA + S-adenosyl-L-homocysteine + H(+). Specifically methylates the uridine in position 2552 of 23S rRNA at the 2'-O position of the ribose in the fully assembled 50S ribosomal subunit. The chain is Ribosomal RNA large subunit methyltransferase E from Cellvibrio japonicus (strain Ueda107) (Pseudomonas fluorescens subsp. cellulosa).